Consider the following 250-residue polypeptide: Ubiquitin-conjugating enzyme E2 6 (250 aa).

The Cytoplasmic portion of the chain corresponds to methionine 1–serine 232. One can recognise a UBC core domain in the interval glutamine 5 to lysine 167. Catalysis depends on cysteine 87, which acts as the Glycyl thioester intermediate. Position 139 is a phosphoserine (serine 139). Threonine 178 carries the phosphothreonine modification. Residues alanine 209–aspartate 229 form a disordered region. Over residues asparagine 219 to asparagine 228 the composition is skewed to basic and acidic residues. A helical membrane pass occupies residues methionine 233–methionine 249.

The protein belongs to the ubiquitin-conjugating enzyme family.

Its subcellular location is the endoplasmic reticulum membrane. It carries out the reaction S-ubiquitinyl-[E1 ubiquitin-activating enzyme]-L-cysteine + [E2 ubiquitin-conjugating enzyme]-L-cysteine = [E1 ubiquitin-activating enzyme]-L-cysteine + S-ubiquitinyl-[E2 ubiquitin-conjugating enzyme]-L-cysteine.. The protein operates within protein modification; protein ubiquitination. In terms of biological role, catalyzes the covalent attachment of ubiquitin to other proteins. Functions in degradation of misfolded or regulated proteins localized in the endoplasmic reticulum (ER) lumen or membrane via the ubiquitin-proteasome system. Cognate E2 conjugating enzyme for the DOA10 ubiquitin ligase complex, which is part of the ERAD-C pathway responsible for the rapid degradation of membrane proteins with misfolded cytoplasmic domains. The chain is Ubiquitin-conjugating enzyme E2 6 (UBC6) from Saccharomyces cerevisiae (strain ATCC 204508 / S288c) (Baker's yeast).